Here is a 15281-residue protein sequence, read N- to C-terminus: Cyclosporin synthetase simA (15281 aa).

The segment at 34–463 (SFAQGRLWFL…AVHVKTMPLT (430 aa)) is condensation 1. Residues 513 to 918 (SYSELDHKSD…NSDQVRDAAV (406 aa)) are adenylation 1. Residues 1026–1100 (APRNEIEAVL…DLAATIQRGS (75 aa)) enclose the Carrier 1 domain. Ser-1060 carries the O-(pantetheine 4'-phosphoryl)serine modification. The segment at 1118–1549 (SFAQGRLWFL…QTPIMTMPLT (432 aa)) is condensation 2. Positions 1599–2004 (SYAELDQRSD…SSAGVHDAVV (406 aa)) are adenylation 2. The tract at residues 2067–2251 (SWTSMYDGTL…LEELEEELLV (185 aa)) is methyltransferase (M) domain 1. One can recognise a Carrier 2 domain in the interval 2524–2598 (APRDSIEAII…DLAATIQQDT (75 aa)). An O-(pantetheine 4'-phosphoryl)serine modification is found at Ser-2558. The interval 2616–3044 (SFAQGRLWFL…EPDMPVASMA (429 aa)) is condensation 3. An adenylation 3 region spans residues 3096–3498 (SYADLDRKSD…SHDLVTDAAV (403 aa)). The interval 3562–3749 (SMYDGSLIKK…EDELLVDPAF (188 aa)) is methyltransferase (M) domain 2. The Carrier 3 domain occupies 4011-4085 (APRTEIERVL…DLVLIVQQGS (75 aa)). At Ser-4045 the chain carries O-(pantetheine 4'-phosphoryl)serine. Positions 4100–4530 (VPQSFAQGRL…GPDVPISTLP (431 aa)) are condensation 4. The adenylation 4 stretch occupies residues 4582-4986 (SYAQLDRESD…FLNDGFVEDV (405 aa)). Positions 5052–5241 (TSMYDGTEID…ELLVDPAFFT (190 aa)) are methyltransferase (M) domain 3. In terms of domain architecture, Carrier 4 spans 5503-5577 (PPRNSVEATV…DLAAVIQRNS (75 aa)). Position 5537 is an O-(pantetheine 4'-phosphoryl)serine (Ser-5537). Residues 5592 to 6023 (VPQSFAQGRL…QPLTPLAVLP (432 aa)) are condensation 5. The tract at residues 6075–6478 (TYAQLDQQSD…SHNSVQDAAV (404 aa)) is adenylation 5. The interval 6545–6729 (WTSMYDGSEI…ELEANEEELL (185 aa)) is methyltransferase (M) domain 4. Residues 7000–7074 (APRNEIEAIL…DLAASIQRES (75 aa)) form the Carrier 5 domain. Ser-7034 carries the post-translational modification O-(pantetheine 4'-phosphoryl)serine. A condensation 6 region spans residues 7092 to 7517 (SFAQGRLWFL…VLDQPLTPIS (426 aa)). Residues 7572 to 7976 (TYAQLDEQSD…DHKSVLAATV (405 aa)) form an adenylation 6 region. A Carrier 6 domain is found at 8060–8134 (PPRDEVEAVL…DLADIIRRGS (75 aa)). At Ser-8094 the chain carries O-(pantetheine 4'-phosphoryl)serine. The tract at residues 8152–8582 (SFAQGRLWFL…PKQRLMAMPI (431 aa)) is condensation 7. The segment at 8633-9038 (TYADLDGQSN…GHDLVHDAAV (406 aa)) is adenylation 7. The tract at residues 9111-9288 (PVNEMKEWLD…EESEEELLVD (178 aa)) is methyltransferase (M) domain 5. The region spanning 9555-9629 (APRNDTEIVL…DLAASIEQGS (75 aa)) is the Carrier 7 domain. The residue at position 9589 (Ser-9589) is an O-(pantetheine 4'-phosphoryl)serine. The interval 9647–10077 (SYAQGRLWFL…QVSISTMPLT (431 aa)) is condensation 8. Residues 10127 to 10529 (SYTSLDQKSE…GNKAIHDAAV (403 aa)) form an adenylation 8 region. Positions 10588–10768 (RDFTSWTSMY…DQIRQEVARL (181 aa)) are methyltransferase (M) domain 6. A Carrier 8 domain is found at 11052–11126 (APRNDIEAVL…DLADVVQTGS (75 aa)). Position 11086 is an O-(pantetheine 4'-phosphoryl)serine (Ser-11086). The tract at residues 11144 to 11567 (SFSQGRLWFL…HANLATLPLT (424 aa)) is condensation 9. The tract at residues 11616–12019 (TYTELDERSS…RDPAISDSAV (404 aa)) is adenylation 9. In terms of domain architecture, Carrier 9 spans 12124 to 12198 (APRNDIETII…QLAASIQQGS (75 aa)). Ser-12158 is subject to O-(pantetheine 4'-phosphoryl)serine. Residues 12216–12645 (SFAQGRLWFL…IAISTMPLVD (430 aa)) form a condensation 10 region. Residues 12696–13096 (TYAELDQQSD…SDSSINDAVV (401 aa)) are adenylation 10. The interval 13162 to 13343 (YDGSLIPREE…EDDEEELLVD (182 aa)) is methyltransferase (M) domain 7. The 75-residue stretch at 13620-13694 (APRTEIEVVL…DLAASILQGS (75 aa)) folds into the Carrier 10 domain. An O-(pantetheine 4'-phosphoryl)serine modification is found at Ser-13654. Positions 13710-14143 (EQSFAQGRLW…PQSPIATMPL (434 aa)) are condensation 11. An adenylation 11 region spans residues 14194–14598 (TYAELDRLSD…SENSVTDAAV (405 aa)). Residues 14695–14769 (APRNETEAAI…SLAGKLEQQQ (75 aa)) form the Carrier 11 domain. At Ser-14729 the chain carries O-(pantetheine 4'-phosphoryl)serine. The segment at 14814–15158 (DMYPATQTQI…HPEAEIEGQQ (345 aa)) is condensation 12. The disordered stretch occupies residues 15169 to 15224 (QARQANGHAPNGTNGTNGTNGTNGANGTNGTNGTNGTHANGINGSNGVNGRDSNVV). Over residues 15173 to 15211 (ANGHAPNGTNGTNGTNGTNGANGTNGTNGTNGTHANGIN) the composition is skewed to low complexity. The segment covering 15213 to 15224 (SNGVNGRDSNVV) has biased composition (polar residues).

Belongs to the NRP synthetase family. Requires pantetheine 4'-phosphate as cofactor.

Nonribosomal peptide synthetase; part of the gene cluster that mediates the biosynthesis of the cycloundecapeptide cyclosporin A (CsA), a compound with antifungal activity used as an immunosuppressant drug. Cyclosporin A contains three non-proteinogenic amino acids: D-alanine, alpha-amino butyric acid and the unusual amino acid (4R)-4-[(E)-2-butenyl]-4-methyl-l-threonine (Bmt). The nonribosomal peptide synthetase (NRPS) catalyzes the elongation and cyclization of the undecapeptide chain. SimA contains 11 modules responsible for sequential uptake of substrates and chain elongation. In addition to the core condensation-adenylation-thiolation (C-A-T) domains present in each module, seven modules contain an additional N-methylation (M) domain (modules 2, 3, 4, 5, 7, 8, and 10). The terminal C domain (C12 or Ct) is implicated in cyclization of the peptidyl chains to form CsA. The first module (A1) takes up D-Ala which is provided by the alanine racemase simB. The A2, A3, A8, and A10 domains have the same substrate-specific signature for recognition of leucine residues. The unusual amino acid (4R)-4-[(E)-2-butenyl]-4-methyl-l-threonine (Bmt) is recognized by the fifth module (A5). The A11 domain recognizes L-Ala. The PKS simG mediates the biosynthesis of 3R-hydroxyl-4R-methyl-6E-octenoic acid from acetyl coenzyme A (acetyl-CoA), malonyl-CoA, and S-adenosylmethionine, and 3R-hydroxyl-4R-methyl-6E-octenoic acid is then be repeatedly oxidized by simI to 3R-hydroxy-4R-methyl-2-keto-6E-octenoic acid. The latter is likely converted to Bmt through the action of the aminotransferase SimJ. The protein is Cyclosporin synthetase simA of Tolypocladium inflatum (Cyclosporin fungus).